The following is a 226-amino-acid chain: Uracil-DNA glycosylase (226 aa).

Asp64 (proton acceptor) is an active-site residue.

It belongs to the uracil-DNA glycosylase (UDG) superfamily. UNG family.

It is found in the cytoplasm. It carries out the reaction Hydrolyzes single-stranded DNA or mismatched double-stranded DNA and polynucleotides, releasing free uracil.. Its function is as follows. Excises uracil residues from the DNA which can arise as a result of misincorporation of dUMP residues by DNA polymerase or due to deamination of cytosine. In Proteus mirabilis (strain HI4320), this protein is Uracil-DNA glycosylase.